The sequence spans 818 residues: H(+)/Cl(-) exchange transporter 3 (818 aa).

Residues 1–125 lie on the Cytoplasmic side of the membrane; that stretch reads MESEQLFHRG…WEMTKSLYDA (125 aa). 3 short sequence motifs (di-leucine internalization motif; mediates targeting to late endosome and lysosome membranes) span residues 28 to 29, 46 to 47, and 71 to 75; these read LL and LLDLL. The helical transmembrane segment at 126–163 threads the bilayer; that stretch reads WSGWLVVTLTGLASGALAGLIDIAADWMTDLKEGICLS. An N-linked (GlcNAc...) asparagine glycan is attached at N177. Residues 209–232 form a helical membrane-spanning segment; that stretch reads MNYIMYIFWALSFAFLAVSLVKVF. Positions 238-242 match the Selectivity filter part_1 motif; sequence GSGIP. Residue S239 coordinates chloride. Positions 241-248 form an intramembrane region, helical; sequence IPEIKTIL. Transmembrane regions (helical) follow at residues 258-276 and 282-301; these read GKWT…VASG and EGPL…YLFP. The short motif at 280-284 is the Selectivity filter part_2 element; that stretch reads GKEGP. Intramembrane regions (helical) lie at residues 313-325 and 329-337; these read VLSA…VSVA and PIGGVLFSL. 3 helical membrane-spanning segments follow: residues 349–367, 391–416, and 423–443; these read LWRS…RSIN, FPFI…AWCR, and FGKY…VIAF. N451 and N479 each carry an N-linked (GlcNAc...) asparagine glycan. A run of 2 helical transmembrane segments spans residues 500–520 and 525–544; these read IWQL…TFGI and GLFI…VGIA. The Selectivity filter part_3 signature appears at 525–529; the sequence is GLFIP. F527 serves as a coordination point for chloride. Intramembrane regions (helical) lie at residues 572–586 and 590–601; these read GLYA…LGGV and TVSLVVIVFELT. The note=Loop between two helices intramembrane region spans 602–605; it reads GGLE. The helical transmembrane segment at 606–624 threads the bilayer; the sequence is YIVPLMAAVMTSKWVGDAF. Over 625–818 the chain is Cytoplasmic; sequence GREGIYEAHI…NQDPASIMFN (194 aa). Chloride is bound at residue Y630. CBS domains are found at residues 658-722 and 755-812; these read MRPR…ARKK and LDMS…NQDP. Residues 689–691 and 796–799 each bind ATP; these read YNG and TKKD.

This sequence belongs to the chloride channel (TC 2.A.49) family. ClC-3/CLCN3 subfamily. As to quaternary structure, monomer and homodimer. Forms heterodimers with CLCN4. Interacts with GOPC, PDZK1 and NHERF1/EBP50. In terms of processing, N-glycosylated. As to expression, expressed primarily in tissues derived from neuroectoderm. Within the brain, its expression is particularly evident in the hippocampus, olfactory cortex, and olfactory bulb. Highly expressed in aortic and coronary vascular smooth muscle cells, and aortic endothelial cells. Also expressed in tracheal and alveolar epithelial cells, and intima and media of the pulmonary vessels. Expressed in bronchus and colon (at protein level).

The protein localises to the early endosome membrane. The protein resides in the late endosome membrane. Its subcellular location is the lysosome membrane. It localises to the cell membrane. It is found in the golgi apparatus membrane. The protein localises to the cell projection. The protein resides in the ruffle membrane. Strongly outwardly rectifying, electrogenic H(+)/Cl(-)exchanger which mediates the exchange of chloride ions against protons. The CLC channel family contains both chloride channels and proton-coupled anion transporters that exchange chloride or another anion for protons. The presence of conserved gating glutamate residues is typical for family members that function as antiporters. Its function is as follows. Strongly outwardly rectifying, electrogenic H(+)/Cl(-)exchanger which mediates the exchange of chloride ions against protons. The sequence is that of H(+)/Cl(-) exchange transporter 3 (CLCN3) from Homo sapiens (Human).